The sequence spans 345 residues: UDP-N-acetylenolpyruvoylglucosamine reductase (345 aa).

Residues 16-186 (LSVSASCIKV…TAVGIFLKKE (171 aa)) form the FAD-binding PCMH-type domain. Residue Arg-162 is part of the active site. The active-site Proton donor is Ser-232. The active site involves Glu-328.

The protein belongs to the MurB family. The cofactor is FAD.

It is found in the cytoplasm. It catalyses the reaction UDP-N-acetyl-alpha-D-muramate + NADP(+) = UDP-N-acetyl-3-O-(1-carboxyvinyl)-alpha-D-glucosamine + NADPH + H(+). Its pathway is cell wall biogenesis; peptidoglycan biosynthesis. Cell wall formation. This chain is UDP-N-acetylenolpyruvoylglucosamine reductase, found in Pectobacterium atrosepticum (strain SCRI 1043 / ATCC BAA-672) (Erwinia carotovora subsp. atroseptica).